Here is a 558-residue protein sequence, read N- to C-terminus: Factor VII-activating protease (558 aa).

Positions 1-23 (MFVRMLVFRVLLLIALVGKSVIG) are cleaved as a signal peptide. 3 consecutive EGF-like domains span residues 71-107 (DDDP…SRCQ), 109-146 (AQNK…PDCS), and 148-186 (VLPA…KFCE). Disulfide bonds link cysteine 75–cysteine 86, cysteine 80–cysteine 95, cysteine 97–cysteine 106, cysteine 113–cysteine 123, cysteine 118–cysteine 134, cysteine 136–cysteine 145, cysteine 152–cysteine 163, cysteine 157–cysteine 174, cysteine 176–cysteine 185, cysteine 192–cysteine 274, cysteine 213–cysteine 255, cysteine 244–cysteine 269, cysteine 299–cysteine 433, cysteine 345–cysteine 361, cysteine 353–cysteine 422, cysteine 445–cysteine 513, cysteine 475–cysteine 491, and cysteine 503–cysteine 531. The 84-residue stretch at 191-274 (DCYVGDGYSY…KWEYCDVTVC (84 aa)) folds into the Kringle domain. One can recognise a Peptidase S1 domain in the interval 312–553 (IYGGFKSTAG…FLNWIKTTMH (242 aa)). Residues histidine 360 and aspartate 409 each act as charge relay system in the active site. The active-site Charge relay system is the serine 507.

Belongs to the peptidase S1 family. As to quaternary structure, heterodimer; disulfide-linked. Heterodimer of a 50 kDa heavy and a 27 kDa light chain linked by a disulfide bond. Post-translationally, proteolytic cleavage at Gly-23 or Met-27 can give rise to the 50 kDa heavy chain (HC) and cleavage at Arg-311 or Lys-317 can give rise to the 27 kDa light chain (LC). The HC can undergo further proteolytic cleavage giving rise to a 26 kDa fragment. The LC can undergo further proteolytic cleavage at Arg-311 leading to a 17-kDa fragment and at Arg-478 leading to a 8-kDa fragment. Liver and kidney.

It is found in the secreted. Its function is as follows. Cleaves the alpha-chain at multiple sites and the beta-chain between 'Lys-53' and 'Lys-54' but not the gamma-chain of fibrinogen and therefore does not initiate the formation of the fibrin clot and does not cause the fibrinolysis directly. It does not cleave (activate) prothrombin and plasminogen but converts the inactive single chain urinary plasminogen activator (pro-urokinase) to the active two chain form. Activates coagulation factor VII. May function as a tumor suppressor negatively regulating cell proliferation and cell migration. The chain is Factor VII-activating protease from Mus musculus (Mouse).